Consider the following 355-residue polypeptide: Alpha-N-acetylneuraminide alpha-2,8-sialyltransferase (355 aa).

The Cytoplasmic segment spans residues 1-28; it reads MSPCGRALHTSRGAMAMLARKFPRTRLP. A helical; Signal-anchor for type II membrane protein transmembrane segment spans residues 29–47; that stretch reads VGASALCVVVLCWLYIFPV. Residues 48–355 lie on the Lumenal side of the membrane; sequence YRLPNEKEIV…CEEPSPQPTS (308 aa). Asn70 and Asn118 each carry an N-linked (GlcNAc...) asparagine glycan. 2 disulfide bridges follow: Cys137-Cys286 and Cys151-Cys346. Residues Asn142 and Asn165 each contribute to the CMP-N-acetyl-beta-neuraminate site. 2 N-linked (GlcNAc...) asparagine glycosylation sites follow: Asn213 and Asn244. Residues Ser273, Thr274, Gly275, Trp295, and His309 each contribute to the CMP-N-acetyl-beta-neuraminate site. Residue His321 is the Proton donor/acceptor of the active site.

It belongs to the glycosyltransferase 29 family.

It localises to the golgi apparatus membrane. It carries out the reaction an N-acetyl-alpha-neuraminyl-(2-&gt;3)-beta-D-galactosyl derivative + CMP-N-acetyl-beta-neuraminate = an N-acetyl-alpha-neuraminyl-(2-&gt;8)-N-acetyl-alpha-neuraminyl-(2-&gt;3)-beta-D-galactosyl derivative + CMP + H(+). It catalyses the reaction a ganglioside GM3 (d18:1(4E)) + CMP-N-acetyl-beta-neuraminate = a ganglioside GD3 (d18:1(4E)) + CMP + H(+). The catalysed reaction is a ganglioside GD3 (d18:1(4E)) + CMP-N-acetyl-beta-neuraminate = a ganglioside GT3 (d18:1(4E)) + CMP + H(+). The enzyme catalyses a ganglioside GD1a (d18:1(4E)) + CMP-N-acetyl-beta-neuraminate = a ganglioside GT1a (d18:1(4E)) + CMP + H(+). It carries out the reaction a ganglioside GT1b (d18:1(4E)) + CMP-N-acetyl-beta-neuraminate = a ganglioside GQ1b (d18:1(4E)) + CMP + H(+). It catalyses the reaction a ganglioside GM1b (d18:1(4E)) + CMP-N-acetyl-beta-neuraminate = a ganglioside GD1c (d18:1(4E)) + CMP + H(+). The catalysed reaction is a ganglioside GD3 + CMP-N-acetyl-beta-neuraminate = a ganglioside GT3 + CMP + H(+). The enzyme catalyses [alpha-N-acetylneuraminyl-(2-&gt;8)](n)-alpha-N-acetylneuraminyl-(2-&gt;8)-alpha-N-acetylneuraminyl-(2-&gt;3)-beta-D-galactosyl-(1-&gt;4)-beta-D-glucosyl-(1&lt;-&gt;1)-ceramide + CMP-N-acetyl-beta-neuraminate = [alpha-N-acetylneuraminyl-(2-&gt;8)](n+1)-alpha-N-acetylneuraminyl-(2-&gt;8)-alpha-N-acetylneuraminyl-(2-&gt;3)-beta-D-galactosyl-(1-&gt;4)-beta-D-glucosyl-(1&lt;-&gt;1)-ceramide + CMP + H(+). It participates in protein modification; protein glycosylation. It functions in the pathway lipid metabolism; sphingolipid metabolism. Functionally, catalyzes the addition of sialic acid in alpha 2,8-linkage to the sialic acid moiety of the ganglioside GM3 to form ganglioside GD3; gangliosides are a subfamily of complex glycosphingolipds that contain one or more residues of sialic acid. Can catalyze the addition of a second alpha-2,8- sialic acid to GD3 to form GT3. Can use GM1b, GD1a and GT1b as acceptor substrates to synthesize GD1c, GT1a and GQ1b respectively. This is Alpha-N-acetylneuraminide alpha-2,8-sialyltransferase from Mus musculus (Mouse).